The sequence spans 273 residues: 2,3,4,5-tetrahydropyridine-2,6-dicarboxylate N-succinyltransferase (273 aa).

The protein belongs to the transferase hexapeptide repeat family.

It is found in the cytoplasm. It carries out the reaction (S)-2,3,4,5-tetrahydrodipicolinate + succinyl-CoA + H2O = (S)-2-succinylamino-6-oxoheptanedioate + CoA. It functions in the pathway amino-acid biosynthesis; L-lysine biosynthesis via DAP pathway; LL-2,6-diaminopimelate from (S)-tetrahydrodipicolinate (succinylase route): step 1/3. In Acinetobacter baumannii (strain SDF), this protein is 2,3,4,5-tetrahydropyridine-2,6-dicarboxylate N-succinyltransferase.